Here is a 176-residue protein sequence, read N- to C-terminus: Disulfide bond formation protein B (176 aa).

Residues 1–14 are Cytoplasmic-facing; that stretch reads MLRFLNQCSQGRGA. The helical transmembrane segment at 15 to 31 threads the bilayer; that stretch reads WLLMAFTALALELTALW. The Periplasmic portion of the chain corresponds to 32 to 49; sequence FQHVMLLKPCVLCIYERC. Cysteine 41 and cysteine 44 form a disulfide bridge. Residues 50–65 form a helical membrane-spanning segment; it reads ALFGVLGAALIGAIAP. At 66–71 the chain is on the cytoplasmic side; it reads KTPLRY. A helical membrane pass occupies residues 72–89; it reads VAMVIWLYSAFRGVQLTY. Residues 90–144 are Periplasmic-facing; sequence EHTMLQLYPSPFATCDFMVRFPEWLPLDKWVPQVFVASGDCAERQWDFLGMEMPQ. Cysteine 104 and cysteine 130 are oxidised to a cystine. The helical transmembrane segment at 145-163 threads the bilayer; sequence WLLGIFIAYLIVAVLVVIS. Over 164–176 the chain is Cytoplasmic; sequence QPFKAKKRDLFGR.

It belongs to the DsbB family.

Its subcellular location is the cell inner membrane. Required for disulfide bond formation in some periplasmic proteins such as PhoA or OmpA. Acts by oxidizing the DsbA protein. This Shigella flexneri protein is Disulfide bond formation protein B.